A 73-amino-acid polypeptide reads, in one-letter code: MRKPKKKVCVFCKDKVEYIDFKDTSLLRKYISDRGKIRARRVSGNCSQHQRDVATAVKNSREMALLPYTASAR.

Belongs to the bacterial ribosomal protein bS18 family. Part of the 30S ribosomal subunit. Forms a tight heterodimer with protein bS6.

Binds as a heterodimer with protein bS6 to the central domain of the 16S rRNA, where it helps stabilize the platform of the 30S subunit. The protein is Small ribosomal subunit protein bS18B of Frankia alni (strain DSM 45986 / CECT 9034 / ACN14a).